Consider the following 326-residue polypeptide: Centriolar satellite-associated tubulin polyglutamylase complex regulator 1 (326 aa).

Positions 1–111 (MLSPERLALP…HCLLQLLCPD (111 aa)) are required for interaction with PCM1. Residues 1–225 (MLSPERLALP…SCPPPALVKE (225 aa)) form a required for interaction with TPGS1, LRRC49, and TTLL1 region.

The protein belongs to the CSTPP1 family. Interacts with PCM1. Interacts with TTLL1, TPGS1, TPGS2 and LRRC49; the interactions link CSTPP1 to the complex TPGC. Binds to alpha-tubulin.

The protein localises to the cytoplasm. The protein resides in the cytoskeleton. It is found in the microtubule organizing center. It localises to the centrosome. Its subcellular location is the centriolar satellite. Its function is as follows. Regulator of the tubulin polyglutamylase complex (TPGC) that controls cytoskeletal organization, nuclear shape, and cilium disassembly by balancing microtubule and actin assembly. Regulates the assembly and stability of the TPGC and thereby modulates polyglutamylation of the microtubule, which antagonizes MAP4 binding. This chain is Centriolar satellite-associated tubulin polyglutamylase complex regulator 1 (CSTPP1), found in Bos taurus (Bovine).